The following is a 208-amino-acid chain: ATP phosphoribosyltransferase (208 aa).

Belongs to the ATP phosphoribosyltransferase family. Short subfamily. As to quaternary structure, heteromultimer composed of HisG and HisZ subunits.

It is found in the cytoplasm. It catalyses the reaction 1-(5-phospho-beta-D-ribosyl)-ATP + diphosphate = 5-phospho-alpha-D-ribose 1-diphosphate + ATP. It participates in amino-acid biosynthesis; L-histidine biosynthesis; L-histidine from 5-phospho-alpha-D-ribose 1-diphosphate: step 1/9. In terms of biological role, catalyzes the condensation of ATP and 5-phosphoribose 1-diphosphate to form N'-(5'-phosphoribosyl)-ATP (PR-ATP). Has a crucial role in the pathway because the rate of histidine biosynthesis seems to be controlled primarily by regulation of HisG enzymatic activity. The sequence is that of ATP phosphoribosyltransferase from Hydrogenovibrio crunogenus (strain DSM 25203 / XCL-2) (Thiomicrospira crunogena).